The following is a 559-amino-acid chain: 2-isopropylmalate synthase (559 aa).

A Pyruvate carboxyltransferase domain is found at 33–307; the sequence is PIWCSSDLRD…NPDLDFSDID (275 aa). Mg(2+) contacts are provided by Asp42, His246, His248, and Asn282. The tract at residues 439–559 is regulatory domain; it reads ANTPYALVSH…SLSQPEAKAA (121 aa).

It belongs to the alpha-IPM synthase/homocitrate synthase family. LeuA type 2 subfamily. In terms of assembly, homodimer. The cofactor is Mg(2+).

The protein resides in the cytoplasm. The enzyme catalyses 3-methyl-2-oxobutanoate + acetyl-CoA + H2O = (2S)-2-isopropylmalate + CoA + H(+). The protein operates within amino-acid biosynthesis; L-leucine biosynthesis; L-leucine from 3-methyl-2-oxobutanoate: step 1/4. Catalyzes the condensation of the acetyl group of acetyl-CoA with 3-methyl-2-oxobutanoate (2-ketoisovalerate) to form 3-carboxy-3-hydroxy-4-methylpentanoate (2-isopropylmalate). This Pseudomonas fluorescens (strain Pf0-1) protein is 2-isopropylmalate synthase.